Consider the following 656-residue polypeptide: Squalene-hopene cyclase (656 aa).

The stretch at 68-110 is one PFTB 1 repeat; that stretch reads EQKIANYLRRCQSREHWGWPVYYGGEFNISASVQAYFALKMTG. The Proton donor role is filled by D396. PFTB repeat units follow at residues 417–459, 485–525, 533–582, and 591–634; these read LDRA…ALLD, IERG…NASG, VLKC…GLMA, and VKRG…QFFP.

The protein belongs to the terpene cyclase/mutase family.

The catalysed reaction is squalene = hop-22(29)-ene. It carries out the reaction squalene + H2O = hopan-22-ol. In terms of biological role, squalene cyclase that catalyzes the oxygen-independent cyclization of squalene into hopanoids, a class of cyclic triterpenoids including hop-22(29)-ene, hop-17(21)-ene, hop-21(22)-ene, and hopan-22-ol. In Schizosaccharomyces japonicus (strain yFS275 / FY16936) (Fission yeast), this protein is Squalene-hopene cyclase.